The primary structure comprises 279 residues: Cholesterol 25-hydroxylase-like protein 2 (279 aa).

N-linked (GlcNAc...) asparagine glycosylation is found at Asn-6 and Asn-13. The next 3 membrane-spanning stretches occupy residues 36–56, 86–106, and 120–140; these read LFPV…YTVL, LALT…AQWL, and LTAF…QYYL. The Fatty acid hydroxylase domain maps to 128-262; it reads VGCTVVFDFQ…FAHWDWLGGT (135 aa). Residues 141-145 carry the Histidine box-1 motif; that stretch reads WHLLH. The Histidine box-2 signature appears at 156 to 160; that stretch reads HALHH. 2 membrane-spanning segments follow: residues 165 to 185 and 189 to 209; these read TFSL…GFWT and PLLL…NIWV. The Histidine box-3 signature appears at 237-243; it reads RHDAHHQ.

It belongs to the sterol desaturase family. Fe cation is required as a cofactor.

Its subcellular location is the endoplasmic reticulum membrane. Functionally, may catalyze the formation of 25-hydroxycholesterol from cholesterol. This Danio rerio (Zebrafish) protein is Cholesterol 25-hydroxylase-like protein 2.